Consider the following 143-residue polypeptide: Large ribosomal subunit protein uL13 (143 aa).

It belongs to the universal ribosomal protein uL13 family. Part of the 50S ribosomal subunit.

In terms of biological role, this protein is one of the early assembly proteins of the 50S ribosomal subunit, although it is not seen to bind rRNA by itself. It is important during the early stages of 50S assembly. The protein is Large ribosomal subunit protein uL13 of Methanosarcina acetivorans (strain ATCC 35395 / DSM 2834 / JCM 12185 / C2A).